Consider the following 962-residue polypeptide: IQ motif and SEC7 domain-containing protein 1 (962 aa).

The interval 1 to 96 (MACRRRYLSS…STSVLRKQAE (96 aa)) is disordered. Over residues 8-19 (LSSLETGSSLST) the composition is skewed to low complexity. Over residues 30–39 (SSETGTSLDS) the composition is skewed to polar residues. S89, S105, and S107 each carry phosphoserine. The IQ domain maps to 134 to 163 (TRHAARTIQTAFRQYQMNKNFERLRSSMSE). Residues S180, S248, and S252 each carry the phosphoserine modification. Disordered regions lie at residues 264-292 (SEEV…HRKL), 311-333 (LSPP…DLRL), and 348-516 (KEDK…DSPA). A compositionally biased stretch (basic and acidic residues) spans 273–292 (ARARDTEPKPGLHGMDHRKL). Basic and acidic residues-rich tracts occupy residues 365–375 (ERPEPRLRVEH) and 429–445 (LPRE…RPLE). Residues 470–488 (DSINSTSNSNDTINCSSES) are compositionally biased toward low complexity. S511 and S514 each carry phosphoserine. Residues 516 to 709 (AFSNDVIRKR…IGIYERIRKR (194 aa)) enclose the SEC7 domain. One can recognise a PH domain in the interval 773 to 865 (HQREIFLFND…LRESVAEVQE (93 aa)). Position 891 is a phosphoserine (S891). Y910 carries the post-translational modification Phosphotyrosine. The tract at residues 921 to 962 (LSSSLRDLSEAGKRGRRSSAGSLESNVEFQPFQPSQPPVLCS) is disordered. Residues S923 and S924 each carry the phosphoserine modification. Polar residues predominate over residues 939 to 948 (SAGSLESNVE).

It belongs to the BRAG family. As to quaternary structure, interacts with ARF1 and ARF6. Interacts with GRIA2; the interaction is required for ARF6 activation.

The protein localises to the cytoplasm. Its subcellular location is the nucleus. It localises to the postsynaptic density. It is found in the cytoplasmic vesicle. The protein resides in the secretory vesicle. The protein localises to the synaptic vesicle. Functionally, guanine nucleotide exchange factor for ARF1 and ARF6. Guanine nucleotide exchange factor activity is enhanced by lipid binding. Accelerates GTP binding by ARFs of all three classes. Guanine nucleotide exchange protein for ARF6, mediating internalization of beta-1 integrin. Involved in neuronal development. In neurons, plays a role in the control of vesicle formation by endocytoc cargo. Upon long term depression, interacts with GRIA2 and mediates the activation of ARF6 to internalize synaptic AMPAR receptors. The polypeptide is IQ motif and SEC7 domain-containing protein 1 (Rattus norvegicus (Rat)).